A 304-amino-acid polypeptide reads, in one-letter code: Murein tetrapeptide carboxypeptidase (304 aa).

The active-site Nucleophile is serine 106. Catalysis depends on charge relay system residues glutamate 200 and histidine 270.

Belongs to the peptidase S66 family.

The protein resides in the cytoplasm. The enzyme catalyses N-acetyl-D-glucosaminyl-N-acetylmuramoyl-L-alanyl-meso-2,6-diaminoheptanedioyl-D-alanine + H2O = N-acetyl-D-glucosaminyl-N-acetylmuramoyl-L-alanyl-meso-2,6-diaminoheptanedioate + D-alanine. It participates in cell wall biogenesis; peptidoglycan recycling. In terms of biological role, releases the terminal D-alanine residue from the cytoplasmic tetrapeptide recycling product L-Ala-gamma-D-Glu-meso-Dap-D-Ala. Can also cleave D-Ala from murein derivatives containing the tetrapeptide, i.e. MurNAc-tetrapeptide, UDP-MurNAc-tetrapeptide, GlcNAc-MurNAc-tetrapeptide, and GlcNAc-anhMurNAc-tetrapeptide. Does not act on murein sacculi or cross-linked muropeptides. The tripeptides produced by the LcdA reaction can then be reused as peptidoglycan building blocks; LcdA is thereby involved in murein recycling. The chain is Murein tetrapeptide carboxypeptidase (ldcA) from Escherichia coli O6:H1 (strain CFT073 / ATCC 700928 / UPEC).